An 89-amino-acid chain; its full sequence is Small ribosomal subunit protein uS15 (89 aa).

Belongs to the universal ribosomal protein uS15 family. In terms of assembly, part of the 30S ribosomal subunit. Forms a bridge to the 50S subunit in the 70S ribosome, contacting the 23S rRNA.

Functionally, one of the primary rRNA binding proteins, it binds directly to 16S rRNA where it helps nucleate assembly of the platform of the 30S subunit by binding and bridging several RNA helices of the 16S rRNA. Its function is as follows. Forms an intersubunit bridge (bridge B4) with the 23S rRNA of the 50S subunit in the ribosome. The chain is Small ribosomal subunit protein uS15 from Chlamydia felis (strain Fe/C-56) (Chlamydophila felis).